The chain runs to 298 residues: Single myb histone 2 (298 aa).

Residues 1–61 (MGVPKQRWTP…KWRNLSVTAG (61 aa)) form the HTH myb-type domain. The H-T-H motif DNA-binding region spans 28–57 (WRTILRDSDFSALLRLRSNVDLKDKWRNLS). The region spanning 124–192 (SVARLDDLIV…KVNQKYRIAP (69 aa)) is the H15 domain. A coiled-coil region spans residues 237–278 (EEAAAFAAKAVAEAEVAMAEAEEAARVAEAAENDAEAAKAFL).

Belongs to the histone H1/H5 family. SMH subfamily. In terms of assembly, forms a homodimer and heterodimers.

The protein localises to the nucleus. It is found in the chromosome. It localises to the nucleolus. Its subcellular location is the telomere. Its function is as follows. Binds preferentially double-stranded telomeric repeats, but may also bind to the single telomeric strand. The chain is Single myb histone 2 (SMH2) from Zea mays (Maize).